Reading from the N-terminus, the 740-residue chain is Rho GTPase-activating protein 92B (740 aa).

A BAR domain is found at 13-246 (ENLSRSSKSD…IQDTIQGTEK (234 aa)). The segment at 49–74 (LPALSGGGGSGSGSSEEQDKRTKKNS) is disordered. The Rho-GAP domain maps to 251 to 448 (TSLKEHLTST…LLISQWDYFF (198 aa)). The segment at 467–740 (GKSKSNSSNE…PPPTNWKSSD (274 aa)) is disordered. 2 positions are modified to phosphoserine: S469 and S473. The segment covering 506–520 (TTNGNGIIMTTSQTS) has biased composition (polar residues). Pro residues predominate over residues 566–577 (PLPPPPVTPAKP). S593 is subject to Phosphoserine. The residue at position 595 (T595) is a Phosphothreonine. Positions 643–655 (TTPTQATIDNGNG) are enriched in polar residues. Residues 659–672 (FKTEHFLDKLRQEN) show a composition bias toward basic and acidic residues. A compositionally biased stretch (polar residues) spans 673–686 (GETNGTREVSSTTK). Low complexity predominate over residues 694 to 713 (PPATAADQNQQQAQPQVTTP). S715 carries the post-translational modification Phosphoserine. T721 carries the post-translational modification Phosphothreonine. Over residues 725 to 734 (PTVPAPPPPT) the composition is skewed to pro residues. Phosphoserine is present on residues S738 and S739.

Its function is as follows. GTPase activator for the Rho-type GTPases by converting them to an inactive GDP-bound state. This chain is Rho GTPase-activating protein 92B (RhoGAP92B), found in Drosophila melanogaster (Fruit fly).